We begin with the raw amino-acid sequence, 425 residues long: Enolase (425 aa).

Gln161 is a binding site for (2R)-2-phosphoglycerate. Glu203 acts as the Proton donor in catalysis. Asp240, Glu283, and Asp310 together coordinate Mg(2+). (2R)-2-phosphoglycerate is bound by residues Lys335, Arg364, Ser365, and Lys386. Residue Lys335 is the Proton acceptor of the active site.

Belongs to the enolase family. As to quaternary structure, component of the RNA degradosome, a multiprotein complex involved in RNA processing and mRNA degradation. Mg(2+) is required as a cofactor.

Its subcellular location is the cytoplasm. It is found in the secreted. The protein resides in the cell surface. It carries out the reaction (2R)-2-phosphoglycerate = phosphoenolpyruvate + H2O. It participates in carbohydrate degradation; glycolysis; pyruvate from D-glyceraldehyde 3-phosphate: step 4/5. In terms of biological role, catalyzes the reversible conversion of 2-phosphoglycerate (2-PG) into phosphoenolpyruvate (PEP). It is essential for the degradation of carbohydrates via glycolysis. The protein is Enolase of Ruthia magnifica subsp. Calyptogena magnifica.